Consider the following 421-residue polypeptide: UDP-N-acetylglucosamine 1-carboxyvinyltransferase (421 aa).

22–23 (KN) is a binding site for phosphoenolpyruvate. Residue R92 participates in UDP-N-acetyl-alpha-D-glucosamine binding. Residue C116 is the Proton donor of the active site. The residue at position 116 (C116) is a 2-(S-cysteinyl)pyruvic acid O-phosphothioketal. 2 residues coordinate UDP-N-acetyl-alpha-D-glucosamine: D306 and V328.

Belongs to the EPSP synthase family. MurA subfamily.

It is found in the cytoplasm. It catalyses the reaction phosphoenolpyruvate + UDP-N-acetyl-alpha-D-glucosamine = UDP-N-acetyl-3-O-(1-carboxyvinyl)-alpha-D-glucosamine + phosphate. It functions in the pathway cell wall biogenesis; peptidoglycan biosynthesis. Cell wall formation. Adds enolpyruvyl to UDP-N-acetylglucosamine. This Thermotoga maritima (strain ATCC 43589 / DSM 3109 / JCM 10099 / NBRC 100826 / MSB8) protein is UDP-N-acetylglucosamine 1-carboxyvinyltransferase.